Here is a 1481-residue protein sequence, read N- to C-terminus: MQRSPLEKASVLSKLFFSWTRPILRKGYRQRLELSDIYQIPSADSADNLSEKLEREWDRELASKKNPKLINALRRCFFWRFMFYGILLYLGEVTKAVQPLLLGRIIASYDPDNKVERSIAIYLGIGLCLLFIVRMLLLHPAIFGLHHIGMQMRIAMFSLIYKKILKLSSRVLDKISIGQLVSLLSNNLNKFDEGLALAHFVWIAPLQVMLLMGLLWELLQASAFCGLGFLIVLALFQSGLGRMMMKYRDQRAGKINERLVITSEMIENIQSVKAYCWEEAMEKMIENLRQTELKLTRKAAYVRYFNSSAFFFSGFFVVFLSVLPYALIKGIILRKIFTTISFCIVLRMAVTRQFPWAVQTWYDSLGAINKIQDFLQKQEYKTLEYNLTTTEVVMENVTAFWEEGFGELFEKAKQNSDNRKISNGDNSLFFSNLALLGTPVLKDISFKIERGQLLAVAGSTGAGKTSLLMMIMGELEPSEGKIKHSGRISFCSQFSWIMPGTIKENIIFGVSYDEYRYRSVIKACQLEEDIAKFAEKDNIVLGEGGITLSGGQRARISLARAVYKDADLYLLDSPFGYLDVLTEKEIFESCVCKLMANKTRILVTSKMEHLKKADKILILHEGSSYFYGTFSELQNLRPDFSSKLMGYDSFDQFSAERRNSILTETLRRFSLEGDAAVSWNETKKQSFKQTGEIGEKRKNSILNSINSLRKFSVVQKTPLQMSGIEEDPDEPSERRLSLVPDSEQGEAILPRSNVINTGPTFQGRRRQSVLNLMTHSVNQGQNIHRINAASTRKMSIAPPANLTEMDIYSRRLSQESSLEISEEINEEDLKECFFDDAENIPAVTTWNTYLRYITVHKSLIFVLIWCLVIFLAEVAVSLVLLWLLGNAPAYNKGNSTISANSSYAVIITSTSAYYVFYIYVGVADTLLALGFFRGLPLVHTLITVSKILHHKMLHSVLQAPMSTLNALKAGGILNRFSKDIAILDDLLPLTIFDFIQLLLIVIGAVAVVSVLQPYIFLATVPVIVTFIILRAYFLHTSQQLKQLESEGRSPIFTHLVTSLKGLWTLRAFGRQPYFETLFHKALNLHTANWFLYLSTLRWFQMRIEMVFVIFFIVVTFISILTTGEGEGQVGIILTLAMNIMGTLQWAVNSSIDVDSLMRSVSRVFKFIDMPTEEGKSTRSIKPSKDCHLSKVMVFENPHVKKDDIWPSGGQMTVKDLTARYLDGGNAILENISFSISPGQRVGLLGRTGSGKSTLLSAFLRLLNTEGEIQIDGVSWDSITLQQWRKAFGVIPQKVFIFSGTFRKNLDPYEQWSDQEIWKVADEVGLRSVIEQFPGKLDFVLVDGGYVLSHGHKQLMCLARSVLSKAKILLLDEPSAHLDPITYQIIRRTLKQAFADCTVILCEHRIEAMLECQRFLVIEENNVRQYDSIQKLLSEKSLFRQAISPSDRMKLFPRRNSSKHKSRPPITALKEETEEEVQDTRL.

At 1 to 77 the chain is on the cytoplasmic side; sequence MQRSPLEKAS…KLINALRRCF (77 aa). A helical transmembrane segment spans residues 78 to 98; the sequence is FWRFMFYGILLYLGEVTKAVQ. The region spanning 81–365 is the ABC transmembrane type-1 1 domain; that stretch reads FMFYGILLYL…WAVQTWYDSL (285 aa). Residues 99–122 are Extracellular-facing; it reads PLLLGRIIASYDPDNKVERSIAIY. Residues 123–146 form a helical membrane-spanning segment; the sequence is LGIGLCLLFIVRMLLLHPAIFGLH. Residues 147 to 195 lie on the Cytoplasmic side of the membrane; that stretch reads HIGMQMRIAMFSLIYKKILKLSSRVLDKISIGQLVSLLSNNLNKFDEGL. The chain crosses the membrane as a helical span at residues 196 to 216; that stretch reads ALAHFVWIAPLQVMLLMGLLW. Topologically, residues 217–222 are extracellular; that stretch reads ELLQAS. The helical transmembrane segment at 223–243 threads the bilayer; it reads AFCGLGFLIVLALFQSGLGRM. The Cytoplasmic portion of the chain corresponds to 244 to 298; it reads MMKYRDQRAGKINERLVITSEMIENIQSVKAYCWEEAMEKMIENLRQTELKLTRK. The helical transmembrane segment at 299-319 threads the bilayer; sequence AAYVRYFNSSAFFFSGFFVVF. Residues 320-339 lie on the Extracellular side of the membrane; it reads LSVLPYALIKGIILRKIFTT. The chain crosses the membrane as a helical span at residues 340–358; it reads ISFCIVLRMAVTRQFPWAV. The Cytoplasmic segment spans residues 359 to 858; it reads QTWYDSLGAI…YLRYITVHKS (500 aa). ATP is bound by residues Trp-401, 458–465, and Gln-493; that span reads GSTGAGKT. The ABC transporter 1 domain occupies 423 to 646; sequence NGDNSLFFSN…RPDFSSKLMG (224 aa). A lipid anchor (S-palmitoyl cysteine) is attached at Cys-524. Ser-549 and Ser-660 each carry phosphoserine. The disordered R region stretch occupies residues 654 to 831; it reads SAERRNSILT…EEINEEDLKE (178 aa). At Ser-670 the chain carries Phosphoserine; by PKA. Residue Ser-686 is modified to Phosphoserine. Lys-688 participates in a covalent cross-link: Glycyl lysine isopeptide (Lys-Gly) (interchain with G-Cter in ubiquitin). Phosphoserine is present on residues Ser-700 and Ser-712. Position 717 is a phosphothreonine (Thr-717). Ser-737, Ser-768, Ser-790, Ser-795, and Ser-813 each carry phosphoserine. The helical transmembrane segment at 859 to 879 threads the bilayer; that stretch reads LIFVLIWCLVIFLAEVAVSLV. Positions 859–1155 constitute an ABC transmembrane type-1 2 domain; it reads LIFVLIWCLV…AVNSSIDVDS (297 aa). Over 880–918 the chain is Extracellular; it reads LLWLLGNAPAYNKGNSTISANSSYAVIITSTSAYYVFYI. 2 N-linked (GlcNAc...) asparagine glycosylation sites follow: Asn-894 and Asn-900. Residues 919–939 traverse the membrane as a discontinuously helical segment; sequence YVGVADTLLALGFFRGLPLVH. Residues 940-990 lie on the Cytoplasmic side of the membrane; it reads TLITVSKILHHKMLHSVLQAPMSTLNALKAGGILNRFSKDIAILDDLLPLT. The chain crosses the membrane as a helical span at residues 991 to 1011; sequence IFDFIQLLLIVIGAVAVVSVL. Topologically, residues 1012–1013 are extracellular; it reads QP. Residues 1014 to 1034 form a helical membrane-spanning segment; sequence YIFLATVPVIVTFIILRAYFL. Residues 1035–1095 are Cytoplasmic-facing; the sequence is HTSQQLKQLE…TANWFLYLST (61 aa). The chain crosses the membrane as a helical span at residues 1096-1116; it reads LRWFQMRIEMVFVIFFIVVTF. Over 1117-1130 the chain is Extracellular; that stretch reads ISILTTGEGEGQVG. The chain crosses the membrane as a helical span at residues 1131–1151; that stretch reads IILTLAMNIMGTLQWAVNSSI. The Cytoplasmic portion of the chain corresponds to 1152–1481; the sequence is DVDSLMRSVS…TEEEVQDTRL (330 aa). In terms of domain architecture, ABC transporter 2 spans 1211–1444; the sequence is MTVKDLTARY…KSLFRQAISP (234 aa). ATP-binding positions include Tyr-1220 and 1245-1252; that span reads GRTGSGKS. The tract at residues 1387-1481 is interaction with GORASP2; sequence RTLKQAFADC…TEEEVQDTRL (95 aa). Cys-1396 is lipidated: S-palmitoyl cysteine. Residues Ser-1445 and Ser-1457 each carry the phosphoserine modification. Positions 1449 to 1481 are disordered; the sequence is KLFPRRNSSKHKSRPPITALKEETEEEVQDTRL. Residues 1450-1462 show a composition bias toward basic residues; the sequence is LFPRRNSSKHKSR. Over residues 1471 to 1481 the composition is skewed to acidic residues; the sequence is ETEEEVQDTRL. The PDZ-binding signature appears at 1479–1481; sequence TRL.

Belongs to the ABC transporter superfamily. ABCC family. CFTR transporter (TC 3.A.1.202) subfamily. As to quaternary structure, monomer; does not require oligomerization for channel activity. May form oligomers in the membrane. Interacts with SLC26A3, SLC26A6 and NHERF1. Interacts with SHANK2. Interacts with MYO6. Interacts (via C-terminus) with GOPC (via PDZ domain); this promotes CFTR internalization and thereby decreases channel activity. Interacts with SLC4A7 through NHERF1. Found in a complex with MYO5B and RAB11A. Interacts with ANO1. Interacts with SLC26A8. Interacts with AHCYL1; the interaction increases CFTR activity. Interacts with CSE1L. The core-glycosylated form interacts with GORASP2 (via PDZ GRASP-type 1 domain) in respone to ER stress. Interacts with MARCHF2; the interaction leads to CFTR ubiqtuitination and degradation. Interacts with ADGRG2. N-glycosylated. In terms of processing, phosphorylated; cAMP treatment promotes phosphorylation and activates the channel. Dephosphorylation decreases the ATPase activity (in vitro). Phosphorylation at PKA sites activates the channel. Phosphorylation at PKC sites enhances the response to phosphorylation by PKA. Phosphorylated by AMPK; this inhibits channel activity. Post-translationally, ubiquitinated, leading to its degradation in the lysosome. Deubiquitination by USP10 in early endosomes enhances its endocytic recycling to the cell membrane. Ubiquitinated by RNF185 during ER stress. Ubiquitinated by MARCHF2.

It is found in the apical cell membrane. The protein localises to the early endosome membrane. It localises to the cell membrane. Its subcellular location is the recycling endosome membrane. The protein resides in the endoplasmic reticulum membrane. It is found in the nucleus. It catalyses the reaction ATP + H2O + closed Cl(-) channel = ADP + phosphate + open Cl(-) channel.. It carries out the reaction chloride(in) = chloride(out). The catalysed reaction is hydrogencarbonate(in) = hydrogencarbonate(out). The enzyme catalyses ATP + H2O = ADP + phosphate + H(+). Its function is as follows. Epithelial ion channel that plays an important role in the regulation of epithelial ion and water transport and fluid homeostasis. Mediates the transport of chloride ions across the cell membrane. Possesses an intrinsic ATPase activity and utilizes ATP to gate its channel; the passive flow of anions through the channel is gated by cycles of ATP binding and hydrolysis by the ATP-binding domains. The ion channel is also permeable to HCO(3)(-); selectivity depends on the extracellular chloride concentration. Exerts its function also by modulating the activity of other ion channels and transporters. Contributes to the regulation of the pH and the ion content of the epithelial fluid layer. Modulates the activity of the epithelial sodium channel (ENaC) complex, in part by regulating the cell surface expression of the ENaC complex. May regulate bicarbonate secretion and salvage in epithelial cells by regulating the transporter SLC4A7. Can inhibit the chloride channel activity of ANO1. Plays a role in the chloride and bicarbonate homeostasis during sperm epididymal maturation and capacitation. The chain is Cystic fibrosis transmembrane conductance regulator from Microcebus murinus (Gray mouse lemur).